A 205-amino-acid polypeptide reads, in one-letter code: High frequency lysogenization protein HflD homolog (205 aa).

Belongs to the HflD family.

The protein localises to the cytoplasm. It is found in the cell inner membrane. This is High frequency lysogenization protein HflD homolog from Haemophilus influenzae (strain PittEE).